Reading from the N-terminus, the 215-residue chain is Large ribosomal subunit protein uL1 (215 aa).

It belongs to the universal ribosomal protein uL1 family. Part of the 50S ribosomal subunit.

In terms of biological role, binds directly to 23S rRNA. Probably involved in E site tRNA release. Its function is as follows. Protein L1 is also a translational repressor protein, it controls the translation of its operon by binding to its mRNA. This chain is Large ribosomal subunit protein uL1, found in Staphylothermus marinus (strain ATCC 43588 / DSM 3639 / JCM 9404 / F1).